The following is a 409-amino-acid chain: Accessory Sec system protein translocase subunit SecY2 (409 aa).

A run of 10 helical transmembrane segments spans residues 16–36 (ILIT…PIPG), 61–81 (LSQV…MILL), 104–124 (VVML…FQYH), 132–152 (LLLA…IGNL), 161–181 (MTIL…PLIF), 190–210 (LAII…ITFE), 242–262 (GMAF…IILL), 286–306 (GVVI…FVNI), 341–361 (LFGT…LLFA), and 374–394 (TGIF…FQVI).

This sequence belongs to the SecY/SEC61-alpha family. SecY2 subfamily. In terms of assembly, component of the accessory SecA2/SecY2 protein translocase complex required to export cell wall proteins. May form heterotrimers with SecE and SecG subunits.

The protein localises to the cell membrane. In terms of biological role, part of the accessory SecA2/SecY2 system specifically required for export of possible cell wall proteins. The central subunit of a protein translocation channel. The protein is Accessory Sec system protein translocase subunit SecY2 of Streptococcus agalactiae serotype Ia (strain ATCC 27591 / A909 / CDC SS700).